The chain runs to 406 residues: SEC14-like protein 4 (406 aa).

The region spanning 76–249 is the CRAL-TRIO domain; the sequence is PPEVIQLYDS…EFGGTMTDPD (174 aa). The region spanning 252–383 is the GOLD domain; it reads PKCLTKINYG…AKKLSYTVEV (132 aa).

Functionally, probable hydrophobic ligand-binding protein; may play a role in the transport of hydrophobic ligands like tocopherol, squalene and phospholipids. The chain is SEC14-like protein 4 (SEC14L4) from Homo sapiens (Human).